The following is a 633-amino-acid chain: MRALFLHSNRIKVIARQKALKEADQLEKPEFDVNKEHLAVFVAVEHGDNLSVAEQLVEEIKKVLEKIGIKEKVVVLYPYVHLTNNPSSPKLAKEVLDKAYDLLKSEGFEVYKAPFGWYKEFEIHVKGHPLAELSRTIKPKKVKKEEGNKVYLIYDGEKEYIIVGKKDKILVKDYKEIENKEKLHFELPKDGIELPIPINQDFEKMVLKEVFSEGEEIEKNPLNDVAKKFGFEWEPLSDYGHMRYKPYAALMVDLVNDYSIKIAKELPFPVFIVKGTNMFDLKQGPVAEHAKLFGERMYEVQSDKSVFVLRYAACFQQFAIAKDLTLSYKNVPFGMLEVADSYRFEQPGEVVLAFRLRKFYMPDLHVFTKDLDEAVEQFLNMHKKIMEEIKKIGRDYELLINVASFEDYEKYKYIIEQIYKDVKKPLLLAIYPKSDQRYWIINIEYHIIDVLGRPREIGTTQIDLHNSKRFGIKYIDKDGSEKHVIILHNAILGSIERYIYALFDTALRKEKPVLPFWISPVQVRVIPVSEKYLEYAEQIAKELESKFRVELDDRDETLNKKIKDAESLWVPYIIVIGEKEIKNNKITVRDRYENKVYETSLEDLISKMEELQKGYPFRPLYGPMKLSLKPANL.

The segment at methionine 1–lysine 143 is editing domain. 2 catalytic regions span residues asparagine 220–proline 515 and proline 221–proline 515. Residues cysteine 314, histidine 365, and histidine 488 each coordinate Zn(2+).

This sequence belongs to the class-II aminoacyl-tRNA synthetase family. As to quaternary structure, homodimer. It depends on Zn(2+) as a cofactor.

Its subcellular location is the cytoplasm. It carries out the reaction tRNA(Thr) + L-threonine + ATP = L-threonyl-tRNA(Thr) + AMP + diphosphate + H(+). Functionally, catalyzes the attachment of threonine to tRNA(Thr) in a two-step reaction: L-threonine is first activated by ATP to form Thr-AMP and then transferred to the acceptor end of tRNA(Thr). Also edits incorrectly charged L-seryl-tRNA(Thr). In Nanoarchaeum equitans (strain Kin4-M), this protein is Threonine--tRNA ligase.